Consider the following 112-residue polypeptide: Nitrogen regulatory protein P-II (112 aa).

Tyrosine 51 is subject to O-UMP-tyrosine.

It belongs to the P(II) protein family. Homotrimer.

In nitrogen-limiting conditions, when the ratio of Gln to 2-ketoglutarate decreases, P-II is uridylylated to P-II-UMP. P-II-UMP allows the deadenylation of glutamine synthetase (GS), thus activating the enzyme. Conversely, in nitrogen excess P-II is deuridylated and promotes the adenylation of GS. P-II indirectly controls the transcription of the GS gene (glnA). P-II prevents NR-II-catalyzed conversion of NR-I to NR-I-phosphate, the transcriptional activator of glnA. When P-II is uridylylated to P-II-UMP, these events are reversed. This chain is Nitrogen regulatory protein P-II (glnB), found in Azospirillum brasilense.